The sequence spans 89 residues: Large ribosomal subunit protein bL27 (89 aa).

A disordered region spans residues 1 to 21 (MAHKKSGGSSRNGRDSNPKYL).

Belongs to the bacterial ribosomal protein bL27 family.

The polypeptide is Large ribosomal subunit protein bL27 (Hyphomonas neptunium (strain ATCC 15444)).